We begin with the raw amino-acid sequence, 279 residues long: uncharacterized protein (279 aa).

The tract at residues 60 to 92 (RKANKLNNKQDSTFFNSASGETNNTILPPGVKN) is disordered. The segment covering 70–85 (DSTFFNSASGETNNTI) has biased composition (polar residues). 3 helical membrane passes run 156–176 (IVGYTNLVIVAFFAGLLAVMN), 202–222 (ISIFVISIVTLPFWTMFILFL), and 237–257 (FIWIVLIINVVLLLVSCLLMI).

Its subcellular location is the cell membrane. This is an uncharacterized protein from Mycoplasma genitalium (strain ATCC 33530 / DSM 19775 / NCTC 10195 / G37) (Mycoplasmoides genitalium).